We begin with the raw amino-acid sequence, 154 residues long: Large ribosomal subunit protein uL13 (154 aa).

This sequence belongs to the universal ribosomal protein uL13 family. Part of the 50S ribosomal subunit.

Functionally, this protein is one of the early assembly proteins of the 50S ribosomal subunit, although it is not seen to bind rRNA by itself. It is important during the early stages of 50S assembly. The polypeptide is Large ribosomal subunit protein uL13 (Sinorhizobium medicae (strain WSM419) (Ensifer medicae)).